The primary structure comprises 525 residues: MLKKQALSGIRRFSLATKQSFVKTSYKLPRKSWLNTAKFNTIRYASTEAAKHNKGSIKQVIGAVVDCQFEDADSLPSILNALEVKLPDNKRLVLEVAQHVGENTVRTIAMDGTEGLVRGTAVIDTGSPISIPVGPGTLGRIMNVIGEPVDERGPIKAVKYSPIHADAPSFEEQSTTPEILETGIKVVDLLAPYARGGKIGLFGGAGVGKTVFIQELINNIAKAHGGYSVFTGVGERTREGNDLYREMQETGVIKLEGESKAALVFGQMNEPPGARARVALTGLTVAEYFRDIEGQDVLLFIDNIFRFTQAGSEVSALLGRIPSAVGYQPTLATDMGAMQERITTTKKGSITSVQAVYVPADDLTDPAPATTFAHLDATTVLSRSISELGIYPAVDPLDSKSRMMDPRILGEEHYNLAGSVQQMLQEYKSLQDIIAILGMDELSEADKLTVERARKVQRFLSQPFAVAEVFTGIEGRLVSLKDTIRSFKEILEGKHDSLPESAFYMVGSIDDAVKKAEKIAQELAA.

The N-terminal 44 residues, M1–Y44, are a transit peptide targeting the mitochondrion. An ATP-binding site is contributed by G203–T210.

The protein belongs to the ATPase alpha/beta chains family. As to quaternary structure, F-type ATPases have 2 components, CF(1) - the catalytic core - and CF(0) - the membrane proton channel. CF(1) has five subunits: alpha(3), beta(3), gamma(1), delta(1), epsilon(1). CF(0) has three main subunits: a, b and c.

The protein resides in the mitochondrion. It is found in the mitochondrion inner membrane. The catalysed reaction is ATP + H2O + 4 H(+)(in) = ADP + phosphate + 5 H(+)(out). Mitochondrial membrane ATP synthase (F(1)F(0) ATP synthase or Complex V) produces ATP from ADP in the presence of a proton gradient across the membrane which is generated by electron transport complexes of the respiratory chain. F-type ATPases consist of two structural domains, F(1) - containing the extramembraneous catalytic core, and F(0) - containing the membrane proton channel, linked together by a central stalk and a peripheral stalk. During catalysis, ATP synthesis in the catalytic domain of F(1) is coupled via a rotary mechanism of the central stalk subunits to proton translocation. Subunits alpha and beta form the catalytic core in F(1). Rotation of the central stalk against the surrounding alpha(3)beta(3) subunits leads to hydrolysis of ATP in three separate catalytic sites on the beta subunits. The chain is ATP synthase subunit beta, mitochondrial (atp2) from Schizosaccharomyces pombe (strain 972 / ATCC 24843) (Fission yeast).